A 184-amino-acid chain; its full sequence is ATP synthase subunit b, chloroplastic (184 aa).

A helical membrane pass occupies residues leucine 27–leucine 49.

This sequence belongs to the ATPase B chain family. In terms of assembly, F-type ATPases have 2 components, F(1) - the catalytic core - and F(0) - the membrane proton channel. F(1) has five subunits: alpha(3), beta(3), gamma(1), delta(1), epsilon(1). F(0) has four main subunits: a(1), b(1), b'(1) and c(10-14). The alpha and beta chains form an alternating ring which encloses part of the gamma chain. F(1) is attached to F(0) by a central stalk formed by the gamma and epsilon chains, while a peripheral stalk is formed by the delta, b and b' chains.

It localises to the plastid. It is found in the chloroplast thylakoid membrane. Functionally, f(1)F(0) ATP synthase produces ATP from ADP in the presence of a proton or sodium gradient. F-type ATPases consist of two structural domains, F(1) containing the extramembraneous catalytic core and F(0) containing the membrane proton channel, linked together by a central stalk and a peripheral stalk. During catalysis, ATP synthesis in the catalytic domain of F(1) is coupled via a rotary mechanism of the central stalk subunits to proton translocation. In terms of biological role, component of the F(0) channel, it forms part of the peripheral stalk, linking F(1) to F(0). This Buxus microphylla (Littleleaf boxwood) protein is ATP synthase subunit b, chloroplastic.